Reading from the N-terminus, the 183-residue chain is Bifunctional protein PyrR (183 aa).

Substrate contacts are provided by residues 42-43 (TR), arginine 87, 104-112 (DDVLYTGRT), arginine 137, and valine 161. The PRPP-binding motif lies at 100 to 112 (VILVDDVLYTGRT).

The protein belongs to the purine/pyrimidine phosphoribosyltransferase family. PyrR subfamily.

It carries out the reaction UMP + diphosphate = 5-phospho-alpha-D-ribose 1-diphosphate + uracil. In terms of biological role, regulates the transcription of the pyrimidine nucleotide (pyr) operon in response to exogenous pyrimidines. Also displays a weak uracil phosphoribosyltransferase activity which is not physiologically significant. The polypeptide is Bifunctional protein PyrR (Deinococcus radiodurans (strain ATCC 13939 / DSM 20539 / JCM 16871 / CCUG 27074 / LMG 4051 / NBRC 15346 / NCIMB 9279 / VKM B-1422 / R1)).